The chain runs to 82 residues: Sulfur carrier protein TusA (82 aa).

Catalysis depends on Cys20, which acts as the Cysteine persulfide intermediate.

This sequence belongs to the sulfur carrier protein TusA family.

It localises to the cytoplasm. Functionally, sulfur carrier protein which probably makes part of a sulfur-relay system. This is Sulfur carrier protein TusA from Aeromonas hydrophila subsp. hydrophila (strain ATCC 7966 / DSM 30187 / BCRC 13018 / CCUG 14551 / JCM 1027 / KCTC 2358 / NCIMB 9240 / NCTC 8049).